A 176-amino-acid chain; its full sequence is Tubulin polymerization-promoting protein family member 3 (176 aa).

The tract at residues 132–151 (TGSHKERFDQTGKGKGKSGR) is disordered. Over residues 134 to 151 (SHKERFDQTGKGKGKSGR) the composition is skewed to basic and acidic residues.

This sequence belongs to the TPPP family.

The protein resides in the cytoplasm. Its subcellular location is the cytoskeleton. Regulator of microtubule dynamic that has microtubule bundling activity. This is Tubulin polymerization-promoting protein family member 3 (tppp3) from Xenopus laevis (African clawed frog).